The primary structure comprises 72 residues: Translation initiation factor IF-1 (72 aa).

In terms of domain architecture, S1-like spans 1 to 72 (MSKSDYIELE…TKGRITFRHK (72 aa)).

This sequence belongs to the IF-1 family. As to quaternary structure, component of the 30S ribosomal translation pre-initiation complex which assembles on the 30S ribosome in the order IF-2 and IF-3, IF-1 and N-formylmethionyl-tRNA(fMet); mRNA recruitment can occur at any time during PIC assembly.

It localises to the cytoplasm. Its function is as follows. One of the essential components for the initiation of protein synthesis. Stabilizes the binding of IF-2 and IF-3 on the 30S subunit to which N-formylmethionyl-tRNA(fMet) subsequently binds. Helps modulate mRNA selection, yielding the 30S pre-initiation complex (PIC). Upon addition of the 50S ribosomal subunit IF-1, IF-2 and IF-3 are released leaving the mature 70S translation initiation complex. This chain is Translation initiation factor IF-1, found in Vesicomyosocius okutanii subsp. Calyptogena okutanii (strain HA).